The following is a 468-amino-acid chain: 6-phosphogluconate dehydrogenase, decarboxylating (468 aa).

NADP(+) is bound by residues 9-14 (GLAVMG), 32-34 (NRS), 73-75 (VQA), and asparagine 101. Substrate contacts are provided by residues asparagine 101 and 127-129 (SGG). The Proton acceptor role is filled by lysine 182. 185–186 (HN) lines the substrate pocket. Catalysis depends on glutamate 189, which acts as the Proton donor. The substrate site is built by tyrosine 190, lysine 259, arginine 286, arginine 444, and histidine 450.

The protein belongs to the 6-phosphogluconate dehydrogenase family. As to quaternary structure, homodimer.

It carries out the reaction 6-phospho-D-gluconate + NADP(+) = D-ribulose 5-phosphate + CO2 + NADPH. It participates in carbohydrate degradation; pentose phosphate pathway; D-ribulose 5-phosphate from D-glucose 6-phosphate (oxidative stage): step 3/3. In terms of biological role, catalyzes the oxidative decarboxylation of 6-phosphogluconate to ribulose 5-phosphate and CO(2), with concomitant reduction of NADP to NADPH. This is 6-phosphogluconate dehydrogenase, decarboxylating (gnd) from Staphylococcus aureus (strain Mu50 / ATCC 700699).